A 141-amino-acid polypeptide reads, in one-letter code: Hemoglobin subunit alpha (141 aa).

The Globin domain occupies Val1–Arg141. Residue Ser3 is modified to Phosphoserine. N6-succinyllysine is present on Lys7. Phosphothreonine is present on Thr8. Lys11 carries the N6-succinyllysine modification. At Lys16 the chain carries N6-acetyllysine; alternate. The residue at position 16 (Lys16) is an N6-succinyllysine; alternate. Residue Tyr24 is modified to Phosphotyrosine. Lys40 is subject to N6-succinyllysine. Position 49 is a phosphoserine (Ser49). Residue His58 coordinates O2. Residue His87 coordinates heme b. Ser102 carries the post-translational modification Phosphoserine. Thr108 bears the Phosphothreonine mark. Phosphoserine is present on Ser124. Residues Thr134 and Thr137 each carry the phosphothreonine modification. A Phosphoserine modification is found at Ser138.

Belongs to the globin family. Heterotetramer of two alpha chains and two beta chains. As to expression, red blood cells.

In terms of biological role, involved in oxygen transport from the lung to the various peripheral tissues. This Tamias striatus (Eastern chipmunk) protein is Hemoglobin subunit alpha.